The chain runs to 369 residues: Ubiquinone biosynthesis protein COQ4, mitochondrial (369 aa).

The N-terminal 35 residues, 1–35 (MLTSQKVSRVLLHSSFLKTPVSTQSRSFVFTTIAT), are a transit peptide targeting the mitochondrion. His212, Asp213, His216, and Glu228 together coordinate Zn(2+). Residues 329–360 (AAAAATVTQRQRQQQRATATAANATSASSANV) are compositionally biased toward low complexity. Positions 329 to 369 (AAAAATVTQRQRQQQRATATAANATSASSANVKPSNTAGAM) are disordered.

The protein belongs to the COQ4 family. As to quaternary structure, component of a multi-subunit COQ enzyme complex, composed of at least COQ3, COQ4, COQ5, COQ6, COQ7 and COQ9. It depends on Zn(2+) as a cofactor.

The protein resides in the mitochondrion inner membrane. It carries out the reaction a 4-hydroxy-3-methoxy-5-(all-trans-polyprenyl)benzoate + H(+) = a 2-methoxy-6-(all-trans-polyprenyl)phenol + CO2. The protein operates within cofactor biosynthesis; ubiquinone biosynthesis. Functionally, lyase that catalyzes the C1-decarboxylation of 4-hydroxy-3-methoxy-5-(all-trans-polyprenyl)benzoic acid into 2-methoxy-6-(all-trans-polyprenyl)phenol during ubiquinone biosynthesis. This Lodderomyces elongisporus (strain ATCC 11503 / CBS 2605 / JCM 1781 / NBRC 1676 / NRRL YB-4239) (Yeast) protein is Ubiquinone biosynthesis protein COQ4, mitochondrial.